The following is a 458-amino-acid chain: tRNA modification GTPase MnmE (458 aa).

Arg23, Glu87, and Arg126 together coordinate (6S)-5-formyl-5,6,7,8-tetrahydrofolate. The TrmE-type G domain maps to 224–380; the sequence is GLSMVIVGKP…LKSKIKDLFF (157 aa). Asn234 provides a ligand contact to K(+). GTP is bound by residues 234–239, 253–259, and 278–281; these read NVGKSS, TDIAGTT, and DTAG. Ser238 provides a ligand contact to Mg(2+). Thr253, Ile255, and Thr258 together coordinate K(+). Thr259 serves as a coordination point for Mg(2+). (6S)-5-formyl-5,6,7,8-tetrahydrofolate is bound at residue Lys458.

The protein belongs to the TRAFAC class TrmE-Era-EngA-EngB-Septin-like GTPase superfamily. TrmE GTPase family. In terms of assembly, homodimer. Heterotetramer of two MnmE and two MnmG subunits. It depends on K(+) as a cofactor.

The protein localises to the cytoplasm. Functionally, exhibits a very high intrinsic GTPase hydrolysis rate. Involved in the addition of a carboxymethylaminomethyl (cmnm) group at the wobble position (U34) of certain tRNAs, forming tRNA-cmnm(5)s(2)U34. The chain is tRNA modification GTPase MnmE from Clostridium perfringens (strain ATCC 13124 / DSM 756 / JCM 1290 / NCIMB 6125 / NCTC 8237 / Type A).